The following is a 181-amino-acid chain: Small ribosomal subunit protein bS16 (181 aa).

The interval Lys150–Glu181 is disordered. Residues Lys158–Glu181 show a composition bias toward low complexity.

This sequence belongs to the bacterial ribosomal protein bS16 family.

This chain is Small ribosomal subunit protein bS16, found in Bacteroides fragilis (strain YCH46).